The sequence spans 954 residues: Glycine dehydrogenase (decarboxylating) (954 aa).

At K706 the chain carries N6-(pyridoxal phosphate)lysine.

Belongs to the GcvP family. In terms of assembly, the glycine cleavage system is composed of four proteins: P, T, L and H. Pyridoxal 5'-phosphate is required as a cofactor.

It carries out the reaction N(6)-[(R)-lipoyl]-L-lysyl-[glycine-cleavage complex H protein] + glycine + H(+) = N(6)-[(R)-S(8)-aminomethyldihydrolipoyl]-L-lysyl-[glycine-cleavage complex H protein] + CO2. Functionally, the glycine cleavage system catalyzes the degradation of glycine. The P protein binds the alpha-amino group of glycine through its pyridoxal phosphate cofactor; CO(2) is released and the remaining methylamine moiety is then transferred to the lipoamide cofactor of the H protein. The sequence is that of Glycine dehydrogenase (decarboxylating) from Pseudomonas syringae pv. tomato (strain ATCC BAA-871 / DC3000).